A 417-amino-acid polypeptide reads, in one-letter code: Gamma-glutamyl phosphate reductase (417 aa).

Belongs to the gamma-glutamyl phosphate reductase family.

It localises to the cytoplasm. It carries out the reaction L-glutamate 5-semialdehyde + phosphate + NADP(+) = L-glutamyl 5-phosphate + NADPH + H(+). It participates in amino-acid biosynthesis; L-proline biosynthesis; L-glutamate 5-semialdehyde from L-glutamate: step 2/2. Functionally, catalyzes the NADPH-dependent reduction of L-glutamate 5-phosphate into L-glutamate 5-semialdehyde and phosphate. The product spontaneously undergoes cyclization to form 1-pyrroline-5-carboxylate. This Escherichia coli O6:H1 (strain CFT073 / ATCC 700928 / UPEC) protein is Gamma-glutamyl phosphate reductase.